The chain runs to 315 residues: 2-oxoglutarate and iron-dependent oxygenase domain-containing protein 3 (315 aa).

Residues M1 to P32 form a disordered region. The Cytoplasmic segment spans residues M1–R41. The segment covering A18–P32 has biased composition (basic and acidic residues). The chain crosses the membrane as a helical; Signal-anchor for type II membrane protein span at residues I42 to I62. Topologically, residues D63–T315 are lumenal. Residues K203 to P305 enclose the Fe2OG dioxygenase domain. N211 carries N-linked (GlcNAc...) asparagine glycosylation. Fe cation is bound by residues H226 and D228. N263 carries an N-linked (GlcNAc...) asparagine glycan. H284 serves as a coordination point for Fe cation. R294 is a catalytic residue. R294 contacts 2-oxoglutarate.

This sequence belongs to the OGFOD3 family. The cofactor is Fe(2+). L-ascorbate serves as cofactor.

The protein localises to the membrane. This is 2-oxoglutarate and iron-dependent oxygenase domain-containing protein 3 (Ogfod3) from Rattus norvegicus (Rat).